We begin with the raw amino-acid sequence, 772 residues long: Bromo adjacent homology domain-containing 1 protein (772 aa).

Disordered regions lie at residues 1–63 (MTHT…RSLV) and 77–117 (LENV…PRKR). S8 bears the Phosphoserine mark. The span at 49-61 (TGRRKNYPLRKRS) shows a compositional bias: basic residues. A phosphoserine mark is found at S101 and S121. Disordered regions lie at residues 131–357 (LLER…PADY), 521–582 (QTVA…RTNG), and 723–743 (PSRKTALVPPSADYSTPPHRT). 3 stretches are compositionally biased toward basic and acidic residues: residues 147 to 158 (RGGDPHRSRDRA), 170 to 182 (RLGDLGEGSRDLS), and 189 to 199 (EGARRDGDPAP). At S182 the chain carries Phosphoserine. S204 is modified (phosphoserine). Positions 280–289 (SAPPHGPPTQ) are enriched in pro residues. Residues 299 to 310 (LENPLRPNLPLL) are compositionally biased toward low complexity. Residues 340 to 352 (FPAPQLSPLPMPG) are compositionally biased toward pro residues. The segment covering 536–548 (GSKSGLRTGSSCR) has biased composition (polar residues). Positions 549–580 (HTVRSKAARRPSHPKQPRAQRPRPRRRRRRRT) are enriched in basic residues. At T580 the chain carries Phosphothreonine. One can recognise a BAH domain in the interval 616-771 (ETIRVRDTVL…FRHGRILKNP (156 aa)).

Interacts with CBX5 (HP1 alpha), HDAC5, MBD1 and SP1. Post-translationally, ubiquitinated in a FBXO11-dependent manner; leading to degradation.

The protein resides in the nucleus. Its subcellular location is the chromosome. Functionally, heterochromatin protein that acts as a transcription repressor and has the ability to promote the formation of large heterochromatic domains. May act by recruiting heterochromatin proteins such as CBX5 (HP1 alpha), HDAC5 and MBD1. Represses IGF2 expression by binding to its CpG-rich P3 promoter and recruiting heterochromatin proteins. In Mus musculus (Mouse), this protein is Bromo adjacent homology domain-containing 1 protein (Bahd1).